The sequence spans 431 residues: Foot protein 1 variant 2 (431 aa).

The first 20 residues, 1–20 (MARNMNILTLFAVLLGSASA), serve as a signal peptide directing secretion. Tyrosine 22 carries the post-translational modification 3',4'-dihydroxyphenylalanine. 4-hydroxyproline is present on proline 33. The stretch at 41 to 50 (VPPPAWTAWK) is one A-1; approximate repeat. The 13 X 10 AA A-P-P-P-A-W-T-A-W-K stretch occupies residues 41–270 (VPPPAWTAWK…APPPAWTAWK (230 aa)). 4 positions are modified to 7'-hydroxytryptophan: tryptophan 46, tryptophan 49, tryptophan 56, and tryptophan 59. Tryptophan 46, tryptophan 49, tryptophan 56, and tryptophan 59 each carry a C-linked (Man) hydroxytryptophan glycan. One copy of the A-2; approximate repeat lies at 51-60 (AHPPAWTAWK). Residues 61–70 (ATPKPWTAWK) form a B-1 repeat. A 27 X 10 AA A-T-P-K-P-W-T-A-W-K region spans residues 61 to 310 (ATPKPWTAWK…ATPKPWTAWR (250 aa)). Proline 65 is subject to 4-hydroxyproline. C-linked (Man) tryptophan glycosylation is present at tryptophan 66. Tryptophan 69 is modified (7'-hydroxytryptophan). C-linked (Man) hydroxytryptophan glycosylation is present at tryptophan 69. Residues 71-80 (APPPAWTAWK) form an A-3 repeat. Residues proline 72, proline 73, and proline 74 each carry the 4-hydroxyproline modification. 7'-hydroxytryptophan is present on residues tryptophan 76 and tryptophan 79. 2 C-linked (Man) hydroxytryptophan glycosylation sites follow: tryptophan 76 and tryptophan 79. The stretch at 81 to 90 (ATPKPWTAWK) is one B-2 repeat. A 4-hydroxyproline modification is found at proline 85. C-linked (Man) tryptophan glycosylation occurs at tryptophan 86. Tryptophan 89 carries the 7'-hydroxytryptophan modification. Residue tryptophan 89 is glycosylated (C-linked (Man) hydroxytryptophan). One copy of the A-4; approximate repeat lies at 91 to 100 (APPPTWTAWK). 3 positions are modified to 4-hydroxyproline: proline 92, proline 93, and proline 94. Tryptophan 96 and tryptophan 99 each carry 7'-hydroxytryptophan. C-linked (Man) hydroxytryptophan glycosylation is found at tryptophan 96 and tryptophan 99. The B-3 repeat unit spans residues 101-110 (ATPKPWTAWK). Proline 105 is subject to 4-hydroxyproline. The C-linked (Man) tryptophan glycan is linked to tryptophan 106. 7'-hydroxytryptophan is present on tryptophan 109. C-linked (Man) hydroxytryptophan glycosylation is present at tryptophan 109. The A-5; approximate repeat unit spans residues 111 to 120 (APPPVWTAWK). 3 positions are modified to 4-hydroxyproline: proline 112, proline 113, and proline 114. Tryptophan 116 and tryptophan 119 each carry 7'-hydroxytryptophan. 2 C-linked (Man) hydroxytryptophan glycosylation sites follow: tryptophan 116 and tryptophan 119. A B-4; approximate repeat occupies 121–130 (ATPKPRTAWK). 4-hydroxyproline is present on proline 125. Tryptophan 129 is subject to 7'-hydroxytryptophan. Tryptophan 129 carries a C-linked (Man) hydroxytryptophan glycan. The stretch at 131 to 140 (APPPTWTAWK) is one A-6; approximate repeat. 4-hydroxyproline is present on residues proline 132, proline 133, and proline 134. Tryptophan 136 and tryptophan 139 each carry 7'-hydroxytryptophan. C-linked (Man) hydroxytryptophan glycans are attached at residues tryptophan 136 and tryptophan 139. One copy of the B-5; approximate repeat lies at 141-150 (AAPKPWTAWK). At proline 145 the chain carries 4-hydroxyproline. Tryptophan 146 is a glycosylation site (C-linked (Man) tryptophan). Residue tryptophan 149 is modified to 7'-hydroxytryptophan. Tryptophan 149 carries C-linked (Man) hydroxytryptophan glycosylation. A B-6 repeat occupies 151 to 160 (ATPKPWTAWK). Position 155 is a 4-hydroxyproline (proline 155). Tryptophan 156 carries a C-linked (Man) tryptophan glycan. Tryptophan 159 bears the 7'-hydroxytryptophan mark. Tryptophan 159 carries a C-linked (Man) hydroxytryptophan glycan. The stretch at 161-170 (APPPAWTAWK) is one A-7 repeat. 3 positions are modified to 4-hydroxyproline: proline 162, proline 163, and proline 164. A 7'-hydroxytryptophan mark is found at tryptophan 166 and tryptophan 169. Tryptophan 166 and tryptophan 169 each carry a C-linked (Man) hydroxytryptophan glycan. The B-7 repeat unit spans residues 171 to 180 (ATPKPWTAWK). The residue at position 175 (proline 175) is a 4-hydroxyproline. Tryptophan 176 carries a C-linked (Man) tryptophan glycan. 7'-hydroxytryptophan is present on tryptophan 179. Tryptophan 179 is a glycosylation site (C-linked (Man) hydroxytryptophan). Residues 181 to 190 (ATPKPWTAWK) form a B-8 repeat. The residue at position 185 (proline 185) is a 4-hydroxyproline. C-linked (Man) tryptophan glycosylation is present at tryptophan 186. Tryptophan 189 bears the 7'-hydroxytryptophan mark. A glycan (C-linked (Man) hydroxytryptophan) is linked at tryptophan 189. A B-9 repeat occupies 191 to 200 (ATPKPWTAWK). Proline 195 carries the post-translational modification 4-hydroxyproline. C-linked (Man) tryptophan glycosylation occurs at tryptophan 196. The residue at position 199 (tryptophan 199) is a 7'-hydroxytryptophan. C-linked (Man) hydroxytryptophan glycosylation occurs at tryptophan 199. The B-10; approximate repeat unit spans residues 201 to 210 (ATPKPWTVWK). Position 205 is a 4-hydroxyproline (proline 205). A C-linked (Man) tryptophan glycan is attached at tryptophan 206. Tryptophan 209 carries the 7'-hydroxytryptophan modification. C-linked (Man) hydroxytryptophan glycosylation occurs at tryptophan 209. The stretch at 211–220 (ATPKPWTAWK) is one B-11 repeat. 4-hydroxyproline is present on proline 215. A glycan (C-linked (Man) tryptophan) is linked at tryptophan 216. Position 219 is a 7'-hydroxytryptophan (tryptophan 219). Tryptophan 219 carries C-linked (Man) hydroxytryptophan glycosylation. Residues 221–230 (APPPAWTAWK) form an A-8 repeat. 4-hydroxyproline is present on residues proline 222, proline 223, and proline 224. A 7'-hydroxytryptophan mark is found at tryptophan 226 and tryptophan 229. Tryptophan 226 and tryptophan 229 each carry a C-linked (Man) hydroxytryptophan glycan. The B-12 repeat unit spans residues 231 to 240 (ATPKPWTAWK). Proline 235 is modified (4-hydroxyproline). Tryptophan 236 carries C-linked (Man) tryptophan glycosylation. A 7'-hydroxytryptophan modification is found at tryptophan 239. C-linked (Man) hydroxytryptophan glycosylation occurs at tryptophan 239. An A-9 repeat occupies 241–250 (APPPAWTAWK). 4-hydroxyproline occurs at positions 242, 243, and 244. Residues tryptophan 246 and tryptophan 249 each carry the 7'-hydroxytryptophan modification. Residues tryptophan 246 and tryptophan 249 are each glycosylated (C-linked (Man) hydroxytryptophan). One copy of the B-13 repeat lies at 251–260 (ATPKPWTAWK). Proline 255 bears the 4-hydroxyproline mark. Tryptophan 256 carries C-linked (Man) tryptophan glycosylation. The residue at position 259 (tryptophan 259) is a 7'-hydroxytryptophan. Tryptophan 259 is a glycosylation site (C-linked (Man) hydroxytryptophan). The A-10 repeat unit spans residues 261–270 (APPPAWTAWK). Proline 262, proline 263, and proline 264 each carry 4-hydroxyproline. Tryptophan 266 and tryptophan 269 each carry 7'-hydroxytryptophan. 2 C-linked (Man) hydroxytryptophan glycosylation sites follow: tryptophan 266 and tryptophan 269. Residues 271 to 280 (ATPKPWTAWK) form a B-14 repeat. The residue at position 275 (proline 275) is a 4-hydroxyproline. A C-linked (Man) tryptophan glycan is attached at tryptophan 276. At tryptophan 279 the chain carries 7'-hydroxytryptophan. C-linked (Man) hydroxytryptophan glycosylation occurs at tryptophan 279. The stretch at 281-290 (ATPKPWTAWK) is one B-15 repeat. Position 285 is a 4-hydroxyproline (proline 285). Tryptophan 286 is a glycosylation site (C-linked (Man) tryptophan). Tryptophan 289 is subject to 7'-hydroxytryptophan. Tryptophan 289 carries C-linked (Man) hydroxytryptophan glycosylation. The stretch at 291–300 (ATPKPWTAWK) is one B-16 repeat. 4-hydroxyproline is present on proline 295. Residue tryptophan 296 is glycosylated (C-linked (Man) tryptophan). A 7'-hydroxytryptophan modification is found at tryptophan 299. A C-linked (Man) hydroxytryptophan glycan is attached at tryptophan 299. A B-17; approximate repeat occupies 301–310 (ATPKPWTAWR). Proline 305 bears the 4-hydroxyproline mark. A C-linked (Man) tryptophan glycan is attached at tryptophan 306. Position 309 is a 7'-hydroxytryptophan (tryptophan 309). Tryptophan 309 is a glycosylation site (C-linked (Man) hydroxytryptophan). Residues 322-377 (GHGYGGYGKPGKPGKPGSKGPRGPAGPPGATGKTGRTGATGKRGPPGYPGKPGVPG) form a disordered region. Over residues 323–332 (HGYGGYGKPG) the composition is skewed to gly residues. A Collagen-like domain is found at 329–380 (GKPGKPGKPGSKGPRGPAGPPGATGKTGRTGATGKRGPPGYPGKPGVPGRNG). The segment covering 336–366 (KPGSKGPRGPAGPPGATGKTGRTGATGKRGP) has biased composition (low complexity). Residues proline 367, proline 370, and proline 376 each carry the 4-hydroxyproline modification.

As to expression, produced by the byssal gland.

It is found in the secreted. Its function is as follows. Provides adhesiveness to the mussel's foot. Mussels produce one of the strongest water insoluble glues. The mussel's adhesive is a bundle of threads, called a byssus, formed by a fibrous collagenous core coated with adhesive proteins. The chain is Foot protein 1 variant 2 from Perna viridis (Asian green mussel).